Reading from the N-terminus, the 328-residue chain is Malate dehydrogenase (328 aa).

NAD(+) is bound at residue glycine 13–alanine 19. Arginine 94 and arginine 100 together coordinate substrate. NAD(+) is bound by residues asparagine 107, glutamine 114, and valine 131–asparagine 133. Substrate contacts are provided by asparagine 133 and arginine 164. Histidine 189 serves as the catalytic Proton acceptor.

It belongs to the LDH/MDH superfamily. MDH type 2 family.

It carries out the reaction (S)-malate + NAD(+) = oxaloacetate + NADH + H(+). Its function is as follows. Catalyzes the reversible oxidation of malate to oxaloacetate. This chain is Malate dehydrogenase, found in Chlamydia felis (strain Fe/C-56) (Chlamydophila felis).